The chain runs to 206 residues: Cytochrome c oxidase assembly protein CtaG (206 aa).

The Cytoplasmic segment spans residues 1–17 (MPEVQPSALPKPAPRLG). The chain crosses the membrane as a helical; Signal-anchor for type II membrane protein span at residues 18-40 (RDAAVASICGFVVALMVGASFAA). Residues 41-206 (VPFYDWFCRT…GEPDQRKGNL (166 aa)) lie on the Periplasmic side of the membrane.

It belongs to the COX11/CtaG family.

It localises to the cell inner membrane. Its function is as follows. Exerts its effect at some terminal stage of cytochrome c oxidase synthesis, probably by being involved in the insertion of the copper B into subunit I. The polypeptide is Cytochrome c oxidase assembly protein CtaG (Rhodopseudomonas palustris (strain BisB5)).